The sequence spans 461 residues: Pyruvate kinase (461 aa).

R46 provides a ligand contact to substrate. Positions 48 and 80 each coordinate K(+). 48-51 (NLAH) contacts ATP. 2 residues coordinate ATP: R87 and K165. Residue E232 coordinates Mg(2+). G255, D256, and T288 together coordinate substrate. Position 256 (D256) interacts with Mg(2+).

Belongs to the pyruvate kinase family. Homotetramer. A divalent metal cation is required as a cofactor.

The catalysed reaction is pyruvate + ATP = phosphoenolpyruvate + ADP + H(+). Its pathway is carbohydrate degradation; glycolysis; pyruvate from D-glyceraldehyde 3-phosphate: step 5/5. Not activated by classical allosteric effectors. In Pyrobaculum aerophilum (strain ATCC 51768 / DSM 7523 / JCM 9630 / CIP 104966 / NBRC 100827 / IM2), this protein is Pyruvate kinase (pyk).